The following is an 815-amino-acid chain: MTHNLGMAPYRLPGPAGGLCPPDFKPPPPTDIISAPSNPKKRRKTSSAANSAAAVAAAAAAAAAANSMQQQQAPPTPQDLLPPPPMGGFGDTIIASNPFDDSPQVSAMSSSAAAAMAAMNQMGGGPGGGHFGGGGPGGHPHWEDRMGMGGGPPPPPHMHPHMHPHHPGGPMGHPHGPHPHMGGPPPMRGMSPMHPHQMGPGPGVGLPPHMNHGRPGGPGGPGGPVPMGSPMGGIAGMGGMSPMGGMGGPSISPHHMGMGGLSPMGGGPNGPNPRAMQGSPMGGPGQNSPMNSLPMGSPMGNPIGSPLGPPSGPGPGNPGNTGGPQQQQQQPPQPPMNNGQMGPPPLHSPLGNGPTGHGSHMPGGPIPGPGPGPGGLVGPGGISPAHGNNPGGSGNNMLGGNPGGGNSNNNGSNTSNASNNNQNPHLSPAAGRLGVPTSMQSNGPSVSSVASSSVPSPATPTLTPTSTATSMSTSVPTSSPAPPAMSPHHSLNSAGPSPGMPNSGPSPLQSPAGPNGPNNNNSNNNNGPMMGQMIPNAVPMQHQQHMGGGPPGHGPGPMPGMGMNQMLPPQQPSHLGPPHPNMMNHPHHPHHHPGGPPPHMMGGPGMHGGPAGMPPHMGGGPNPHMMGGPHGNAGPHMGHGHMGGVPGPGPGPGGMNGPPHPHMSPHHGHPHHHHNPMGGPGPNMFGGGGGGPMGPGGPMGNMGPMGGGPMGGPMGVGPKPMTMGGGKMYPPGQPMVFNPQNPNAPPIYPCGMCHKEVNDNDEAVFCESGCNFFFHRTCVGLTEAAFQMLNKEVFAEWCCDKCVSSKHIPMVKFKC.

Disordered regions lie at residues 1–107 (MTHN…QVSA) and 147–711 (GMGG…GPMG). The short motif at 39-45 (PKKRRKT) is the Nuclear localization signal element. Low complexity predominate over residues 46–73 (SSAANSAAAVAAAAAAAAAANSMQQQQA). Over residues 74–86 (PPTPQDLLPPPPM) the composition is skewed to pro residues. Positions 188 to 199 (RGMSPMHPHQMG) are enriched in low complexity. Gly residues-rich tracts occupy residues 230–248 (PMGG…GMGG) and 257–269 (GMGG…GGPN). Over residues 307-316 (LGPPSGPGPG) the composition is skewed to pro residues. Composition is skewed to low complexity over residues 323–341 (GPQQ…NGQM), 407–424 (SNNN…NQNP), 444–478 (PSVS…VPTS), and 495–545 (GPSP…HQQH). Positions 569 to 580 (PQQPSHLGPPHP) are enriched in pro residues. The segment covering 602-621 (GGPGMHGGPAGMPPHMGGGP) has biased composition (gly residues). Over residues 622–636 (NPHMMGGPHGNAGPH) the composition is skewed to low complexity. Positions 640–656 (GHMGGVPGPGPGPGGMN) are enriched in gly residues. Residues 663-675 (MSPHHGHPHHHHN) show a composition bias toward basic residues. Over residues 678–711 (GGPGPNMFGGGGGGPMGPGGPMGNMGPMGGGPMG) the composition is skewed to gly residues. The PHD-type zinc-finger motif lies at 747-805 (IYPCGMCHKEVNDNDEAVFCESGCNFFFHRTCVGLTEAAFQMLNKEVFAEWCCDKCVSS).

As to quaternary structure, binds to BCL9 via the PHD-type zinc finger motif, and thereby becomes part of the nuclear ARM/PAN complex. In terms of tissue distribution, ubiquitous throughout embryogenesis and larval development.

It is found in the nucleus. Functionally, involved in signal transduction through the Wnt pathway. The sequence is that of Protein pygopus (pygo) from Drosophila melanogaster (Fruit fly).